The chain runs to 207 residues: Cytochrome c biogenesis ATP-binding export protein CcmA (207 aa).

The region spanning 4–207 (LEARELLCER…RISLTQTRAA (204 aa)) is the ABC transporter domain. 36-43 (GSNGAGKT) is a binding site for ATP.

Belongs to the ABC transporter superfamily. CcmA exporter (TC 3.A.1.107) family. In terms of assembly, the complex is composed of two ATP-binding proteins (CcmA) and two transmembrane proteins (CcmB).

The protein localises to the cell inner membrane. It catalyses the reaction heme b(in) + ATP + H2O = heme b(out) + ADP + phosphate + H(+). Its function is as follows. Part of the ABC transporter complex CcmAB involved in the biogenesis of c-type cytochromes; once thought to export heme, this seems not to be the case, but its exact role is uncertain. Responsible for energy coupling to the transport system. This Shigella flexneri protein is Cytochrome c biogenesis ATP-binding export protein CcmA.